The chain runs to 221 residues: ATP synthase subunit delta (221 aa).

The segment covering 1–13 (MGPVPEEHQRESE) has biased composition (basic and acidic residues). Residues 1-31 (MGPVPEEHQRESETVASNGANESGAAVTGIP) are disordered.

This sequence belongs to the ATPase delta chain family. F-type ATPases have 2 components, F(1) - the catalytic core - and F(0) - the membrane proton channel. F(1) has five subunits: alpha(3), beta(3), gamma(1), delta(1), epsilon(1). F(0) has three main subunits: a(1), b(2) and c(10-14). The alpha and beta chains form an alternating ring which encloses part of the gamma chain. F(1) is attached to F(0) by a central stalk formed by the gamma and epsilon chains, while a peripheral stalk is formed by the delta and b chains.

The protein localises to the cell inner membrane. Its function is as follows. F(1)F(0) ATP synthase produces ATP from ADP in the presence of a proton or sodium gradient. F-type ATPases consist of two structural domains, F(1) containing the extramembraneous catalytic core and F(0) containing the membrane proton channel, linked together by a central stalk and a peripheral stalk. During catalysis, ATP synthesis in the catalytic domain of F(1) is coupled via a rotary mechanism of the central stalk subunits to proton translocation. In terms of biological role, this protein is part of the stalk that links CF(0) to CF(1). It either transmits conformational changes from CF(0) to CF(1) or is implicated in proton conduction. The protein is ATP synthase subunit delta of Granulibacter bethesdensis (strain ATCC BAA-1260 / CGDNIH1).